Here is a 105-residue protein sequence, read N- to C-terminus: Nitrogenase-stabilizing/protective protein NifW (105 aa).

The protein belongs to the NifW family. As to quaternary structure, homotrimer; associates with NifD.

May protect the nitrogenase Fe-Mo protein from oxidative damage. The protein is Nitrogenase-stabilizing/protective protein NifW of Nostoc punctiforme (strain ATCC 29133 / PCC 73102).